The chain runs to 530 residues: GH3 domain-containing protein (530 aa).

Positions 1 to 17 are cleaved as a signal peptide; the sequence is MLLWPLLLLLLLLPTLA. Residues 99–122 are disordered; the sequence is LTKASQTQQEDSGEQPLPPTSNQD. Asparagine 450 carries N-linked (GlcNAc...) asparagine glycosylation. Residue glutamine 489 is modified to N5-methylglutamine.

The protein belongs to the GH3 family. In terms of processing, methylated at Gln-489 by N6AMT1.

The protein resides in the endoplasmic reticulum. It localises to the nucleus envelope. This is GH3 domain-containing protein (GHDC) from Homo sapiens (Human).